Here is a 63-residue protein sequence, read N- to C-terminus: MKANELREKSVEELNTELLGLLREQFNLRMQAASGQLQQTHMVKQVRHNIARVKTLLTQKAGA.

The protein belongs to the universal ribosomal protein uL29 family.

This Pectobacterium atrosepticum (strain SCRI 1043 / ATCC BAA-672) (Erwinia carotovora subsp. atroseptica) protein is Large ribosomal subunit protein uL29.